Reading from the N-terminus, the 438-residue chain is UPF0597 protein YE0448 (438 aa).

Belongs to the UPF0597 family.

The protein is UPF0597 protein YE0448 of Yersinia enterocolitica serotype O:8 / biotype 1B (strain NCTC 13174 / 8081).